The primary structure comprises 567 residues: Probable transport protein (567 aa).

Residues 1-30 show a composition bias toward basic and acidic residues; the sequence is MSDRVEVNERRSDSVSEKEPARDDARKDVT. The segment at 1–38 is disordered; that stretch reads MSDRVEVNERRSDSVSEKEPARDDARKDVTDDQEDAPP. The Cytoplasmic segment spans residues 1–46; sequence MSDRVEVNERRSDSVSEKEPARDDARKDVTDDQEDAPPFMTANNAR. Residues 47–67 traverse the membrane as a helical segment; sequence VMLVQAIGGSLNGYSIGFVGV. Topologically, residues 68–160 are extracellular; sequence YSTLFGYSTN…PSGYSSSESG (93 aa). A helical membrane pass occupies residues 161–181; that stretch reads IFAGSMIAGCLIGSVFAGPLA. The Cytoplasmic segment spans residues 182 to 189; that stretch reads SKIGARLS. Residues 190–210 form a helical membrane-spanning segment; the sequence is FLLVGLVGVVASVMYHASCAA. Over 211-212 the chain is Extracellular; the sequence is DE. A helical transmembrane segment spans residues 213 to 233; sequence FWVLIVGRFVIGLFLGVICVA. At 234 to 249 the chain is on the cytoplasmic side; it reads CPVYTDQNAHPKWKRT. A helical transmembrane segment spans residues 250–270; the sequence is IGVMFQVFTTLGIFVAALMGL. Residues 271–289 lie on the Extracellular side of the membrane; that stretch reads ALGQSIRFDHDGDQKVMAR. Residues 290-310 form a helical membrane-spanning segment; sequence MQGLCVFSTLFSLLTVVLGIV. Topologically, residues 311–341 are cytoplasmic; it reads TRESRAKFDGGEEGRAELNPSEYGYVEMIPR. The helical transmembrane segment at 342–362 threads the bilayer; the sequence is LLMGCVMAGTLQLTGINAVMN. The Extracellular portion of the chain corresponds to 363 to 366; the sequence is YAPT. The chain crosses the membrane as a helical span at residues 367–387; sequence IMGSLGLAPLVGNFVVMLWNF. The Cytoplasmic segment spans residues 388–404; that stretch reads VTTLASIPLSYVFTMRH. A helical transmembrane segment spans residues 405 to 425; it reads VFLFGSIFTSCMCLFMCGIPV. Over 426 to 437 the chain is Extracellular; the sequence is YPGVSKKLEAKN. Residues 438–458 traverse the membrane as a helical segment; it reads GVAITGILLFILGFEVCVGPC. The Cytoplasmic portion of the chain corresponds to 459–480; the sequence is YYVLTQDMFPPSFRPRGASFTQ. A helical membrane pass occupies residues 481 to 501; sequence VAQFIFNLIINVCYPIATESI. Residues 502 to 514 lie on the Extracellular side of the membrane; sequence SGGPSGNQDKGQA. Residues 515–535 traverse the membrane as a helical segment; sequence VAFIFFGGLGLICFVIQVFFL. At 536–567 the chain is on the cytoplasmic side; that stretch reads HPWDEERDGKKVVAPAIGKKELSEESIGNRAE.

It belongs to the major facilitator superfamily. Sugar transporter (TC 2.A.1.1) family.

The protein resides in the membrane. Its function is as follows. Probable membrane transport protein. This Leishmania enriettii protein is Probable transport protein (PRO-1).